Reading from the N-terminus, the 126-residue chain is Anti-adapter protein IraD (126 aa).

This sequence belongs to the GpW/Gp25 family. IraD subfamily. Interacts with RssB.

Its subcellular location is the cytoplasm. Its function is as follows. Inhibits RpoS proteolysis by regulating RssB activity, thereby increasing the stability of the sigma stress factor RpoS during oxidative stress. Its effect on RpoS stability is due to its interaction with RssB, which probably blocks the interaction of RssB with RpoS, and the consequent delivery of the RssB-RpoS complex to the ClpXP protein degradation pathway. The chain is Anti-adapter protein IraD from Salmonella arizonae (strain ATCC BAA-731 / CDC346-86 / RSK2980).